A 112-amino-acid polypeptide reads, in one-letter code: UPF0102 protein Spea_0251 (112 aa).

Belongs to the UPF0102 family.

The chain is UPF0102 protein Spea_0251 from Shewanella pealeana (strain ATCC 700345 / ANG-SQ1).